Here is a 242-residue protein sequence, read N- to C-terminus: Ribonuclease 3 2 (242 aa).

The RNase III domain maps to 12-137 (LESLVRKLGL…VLGALYLSTS (126 aa)). E51 lines the Mg(2+) pocket. D55 is a catalytic residue. Mg(2+) contacts are provided by D123 and E126. E126 is a catalytic residue. One can recognise a DRBM domain in the interval 165-235 (NYKAALQEWT…AKVAFLAITP (71 aa)).

It belongs to the ribonuclease III family. As to quaternary structure, homodimer. Mg(2+) serves as cofactor.

It is found in the cytoplasm. It catalyses the reaction Endonucleolytic cleavage to 5'-phosphomonoester.. Digests double-stranded RNA. Involved in the processing of primary rRNA transcript to yield the immediate precursors to the large and small rRNAs (23S and 16S). Processes some mRNAs, and tRNAs when they are encoded in the rRNA operon. Processes pre-crRNA and tracrRNA of type II CRISPR loci if present in the organism. The chain is Ribonuclease 3 2 (rnc2) from Nostoc sp. (strain PCC 7120 / SAG 25.82 / UTEX 2576).